A 378-amino-acid chain; its full sequence is Protein RecA (378 aa).

G79–T86 contributes to the ATP binding site.

The protein belongs to the RecA family.

It is found in the cytoplasm. In terms of biological role, can catalyze the hydrolysis of ATP in the presence of single-stranded DNA, the ATP-dependent uptake of single-stranded DNA by duplex DNA, and the ATP-dependent hybridization of homologous single-stranded DNAs. It interacts with LexA causing its activation and leading to its autocatalytic cleavage. The polypeptide is Protein RecA (Streptococcus pyogenes serotype M1).